The sequence spans 530 residues: Probable glycerol-3-phosphate acyltransferase 2 (530 aa).

3 consecutive transmembrane segments (helical) span residues 70–90 (YFMVVAFEAGGVIRSLFLLVL), 93–113 (FISLMSYEMGLKTMVMLSFFG), and 275–295 (LVLFMWAPFAAVLAAARLVFG). The short motif at 339 to 344 (HRTLLD) is the HXXXXD motif element.

This sequence belongs to the GPAT/DAPAT family. As to expression, weakly or not expressed in roots, leaves, seedlings, developing siliques and flower buds.

The protein localises to the membrane. The catalysed reaction is sn-glycerol 3-phosphate + an acyl-CoA = a 1-acyl-sn-glycero-3-phosphate + CoA. It participates in phospholipid metabolism; CDP-diacylglycerol biosynthesis; CDP-diacylglycerol from sn-glycerol 3-phosphate: step 1/3. Functionally, esterifies acyl-group from acyl-ACP to the sn-1 position of glycerol-3-phosphate, an essential step in glycerolipid biosynthesis. In Arabidopsis thaliana (Mouse-ear cress), this protein is Probable glycerol-3-phosphate acyltransferase 2 (GPAT2).